Reading from the N-terminus, the 107-residue chain is UPF0060 membrane protein mll7841 (107 aa).

4 consecutive transmembrane segments (helical) span residues 4-24 (LFYTAAALAEIAGCFSVWAWW), 30-50 (PLWLAPGFVSLLLFAWLLALV), 60-80 (AAYGGIYIAASLAWLWLVEGV), and 87-107 (LAGAALCIAGASLILLAPRGA).

The protein belongs to the UPF0060 family.

The protein resides in the cell inner membrane. In Mesorhizobium japonicum (strain LMG 29417 / CECT 9101 / MAFF 303099) (Mesorhizobium loti (strain MAFF 303099)), this protein is UPF0060 membrane protein mll7841.